The chain runs to 277 residues: 4-diphosphocytidyl-2-C-methyl-D-erythritol kinase (277 aa).

K9 is an active-site residue. Residue 91 to 101 (PMGAGLGGGSS) coordinates ATP. D133 is a catalytic residue.

The protein belongs to the GHMP kinase family. IspE subfamily.

It carries out the reaction 4-CDP-2-C-methyl-D-erythritol + ATP = 4-CDP-2-C-methyl-D-erythritol 2-phosphate + ADP + H(+). It participates in isoprenoid biosynthesis; isopentenyl diphosphate biosynthesis via DXP pathway; isopentenyl diphosphate from 1-deoxy-D-xylulose 5-phosphate: step 3/6. Its function is as follows. Catalyzes the phosphorylation of the position 2 hydroxy group of 4-diphosphocytidyl-2C-methyl-D-erythritol. This chain is 4-diphosphocytidyl-2-C-methyl-D-erythritol kinase, found in Acinetobacter baumannii (strain AB307-0294).